The primary structure comprises 284 residues: MFDRLAVLPQYLLPKQAITLLAGRVAGARGGKWTTRLIEWFVKRYKVNMREAANPEVASYATFNDFFTRALQAGARPLARADLICPVDGAISQFGAMAGQQIFQAKGHHYSSTALVGGDAALAAQFDDGHFATLYLSPRDYHRIHMPCDGVLRRMIYVPGALFSVNPTTALGVPGLFARNERVVCVFESARGPFVLVLVGATIVGSMATVWHGVVNPPRSTAVREWRYDEQPVRLKQGEEMGRFLLGSTVVMLFPKGPLQFNPAWSPGAAIRLGEAMARQPPLA.

Active-site charge relay system; for autoendoproteolytic cleavage activity residues include Asp88, His145, and Ser248. Ser248 acts as the Schiff-base intermediate with substrate; via pyruvic acid; for decarboxylase activity in catalysis. Ser248 carries the pyruvic acid (Ser); by autocatalysis modification.

The protein belongs to the phosphatidylserine decarboxylase family. PSD-B subfamily. Prokaryotic type I sub-subfamily. Heterodimer of a large membrane-associated beta subunit and a small pyruvoyl-containing alpha subunit. Requires pyruvate as cofactor. In terms of processing, is synthesized initially as an inactive proenzyme. Formation of the active enzyme involves a self-maturation process in which the active site pyruvoyl group is generated from an internal serine residue via an autocatalytic post-translational modification. Two non-identical subunits are generated from the proenzyme in this reaction, and the pyruvate is formed at the N-terminus of the alpha chain, which is derived from the carboxyl end of the proenzyme. The autoendoproteolytic cleavage occurs by a canonical serine protease mechanism, in which the side chain hydroxyl group of the serine supplies its oxygen atom to form the C-terminus of the beta chain, while the remainder of the serine residue undergoes an oxidative deamination to produce ammonia and the pyruvoyl prosthetic group on the alpha chain. During this reaction, the Ser that is part of the protease active site of the proenzyme becomes the pyruvoyl prosthetic group, which constitutes an essential element of the active site of the mature decarboxylase.

It is found in the cell membrane. The enzyme catalyses a 1,2-diacyl-sn-glycero-3-phospho-L-serine + H(+) = a 1,2-diacyl-sn-glycero-3-phosphoethanolamine + CO2. Its pathway is phospholipid metabolism; phosphatidylethanolamine biosynthesis; phosphatidylethanolamine from CDP-diacylglycerol: step 2/2. Catalyzes the formation of phosphatidylethanolamine (PtdEtn) from phosphatidylserine (PtdSer). The protein is Phosphatidylserine decarboxylase proenzyme of Albidiferax ferrireducens (strain ATCC BAA-621 / DSM 15236 / T118) (Rhodoferax ferrireducens).